The primary structure comprises 303 residues: Ornithine carbamoyltransferase (303 aa).

Carbamoyl phosphate contacts are provided by residues 52-55 (STRT), Q79, R103, and 130-133 (HPCQ). Residues N161, D222, and 226-227 (SM) contribute to the L-ornithine site. Carbamoyl phosphate is bound by residues 262–263 (CL) and R290.

The protein belongs to the aspartate/ornithine carbamoyltransferase superfamily. OTCase family.

The protein localises to the cytoplasm. It catalyses the reaction carbamoyl phosphate + L-ornithine = L-citrulline + phosphate + H(+). It participates in amino-acid biosynthesis; L-arginine biosynthesis; L-arginine from L-ornithine and carbamoyl phosphate: step 1/3. Reversibly catalyzes the transfer of the carbamoyl group from carbamoyl phosphate (CP) to the N(epsilon) atom of ornithine (ORN) to produce L-citrulline. The polypeptide is Ornithine carbamoyltransferase (Geobacter sulfurreducens (strain ATCC 51573 / DSM 12127 / PCA)).